Consider the following 65-residue polypeptide: NADH dehydrogenase [ubiquinone] 1 alpha subcomplex subunit 1 (65 aa).

A helical transmembrane segment spans residues 3–23; the sequence is LVWLEAMLPLGIIGGMLCIMG.

It belongs to the complex I NDUFA1 subunit family. In terms of assembly, complex I is composed of at least 49 different subunits.

The protein localises to the mitochondrion inner membrane. Accessory subunit of the mitochondrial membrane respiratory chain NADH dehydrogenase (Complex I), that is believed not to be involved in catalysis. Complex I functions in the transfer of electrons from NADH to the respiratory chain. The immediate electron acceptor for the enzyme is believed to be ubiquinone. The chain is NADH dehydrogenase [ubiquinone] 1 alpha subcomplex subunit 1 from Arabidopsis thaliana (Mouse-ear cress).